Reading from the N-terminus, the 153-residue chain is Ribosome maturation factor RimP (153 aa).

Belongs to the RimP family.

It is found in the cytoplasm. Required for maturation of 30S ribosomal subunits. The protein is Ribosome maturation factor RimP of Clostridium botulinum (strain Loch Maree / Type A3).